We begin with the raw amino-acid sequence, 486 residues long: Membrane-bound lytic murein transglycosylase F (486 aa).

The signal sequence occupies residues 1–21 (MTRIKLSYFTIGLVALLLALA). The tract at residues 22–268 (LWPNIPWRNG…RLEEKYLGHV (247 aa)) is non-LT domain. The tract at residues 269–486 (GSFDYVDTKT…VVGPGWSIGD (218 aa)) is LT domain. Glutamate 313 is an active-site residue.

It in the N-terminal section; belongs to the bacterial solute-binding protein 3 family. The protein in the C-terminal section; belongs to the transglycosylase Slt family.

The protein resides in the cell outer membrane. The catalysed reaction is Exolytic cleavage of the (1-&gt;4)-beta-glycosidic linkage between N-acetylmuramic acid (MurNAc) and N-acetylglucosamine (GlcNAc) residues in peptidoglycan, from either the reducing or the non-reducing ends of the peptidoglycan chains, with concomitant formation of a 1,6-anhydrobond in the MurNAc residue.. In terms of biological role, murein-degrading enzyme that degrades murein glycan strands and insoluble, high-molecular weight murein sacculi, with the concomitant formation of a 1,6-anhydromuramoyl product. Lytic transglycosylases (LTs) play an integral role in the metabolism of the peptidoglycan (PG) sacculus. Their lytic action creates space within the PG sacculus to allow for its expansion as well as for the insertion of various structures such as secretion systems and flagella. This chain is Membrane-bound lytic murein transglycosylase F, found in Yersinia pestis bv. Antiqua (strain Antiqua).